The primary structure comprises 217 residues: Cytidylate kinase (217 aa).

Glycine 10–threonine 18 lines the ATP pocket.

It belongs to the cytidylate kinase family. Type 1 subfamily.

It localises to the cytoplasm. The enzyme catalyses CMP + ATP = CDP + ADP. The catalysed reaction is dCMP + ATP = dCDP + ADP. The protein is Cytidylate kinase of Clostridium botulinum (strain Okra / Type B1).